A 75-amino-acid polypeptide reads, in one-letter code: Conotoxin Leo-O3 (75 aa).

The first 22 residues, 1–22 (MKLTCVVIVAVLFLTACQLATA), serve as a signal peptide directing secretion. Positions 23 to 42 (DISGGMRKHRALRSTTKLSR) are excised as a propeptide. Intrachain disulfides connect C47/C60, C54/C63, and C59/C69. At C69 the chain carries Cysteine amide. The propeptide occupies 70 to 75 (GSGLHV).

Belongs to the conotoxin O1 superfamily. As to expression, expressed by the venom duct.

The protein resides in the secreted. This chain is Conotoxin Leo-O3, found in Conus leopardus (Leopard cone).